A 358-amino-acid polypeptide reads, in one-letter code: MDKLVDNFLSGQSRTMSEDLLSASSPQLCYENLNGSCIRSPYSPGPRLILYAVFGFGAVLAVCGNLLVMTSILHFRQLHSPANFLVASLACADFLVGLTVMPFSTVRSVEGCWYFGDTYCKFHSCFEGSFCYSSIFHLCFISVDRYIAVSDPLIYPTRFTASVSGKCITFSWLLSIIYSFSLLYTGANEAGLEDLVSALTCVGGCQIAVNQSWVFINFLLFLVPTLVMMTVYSKIFLIAKQQAQNIEKMSKQTTRASESYKDRVAKRERKAAKTLGIAVAAFLLSWLPYFIDSIIDAFLGFITPTYVYEILVWIAYYNSAMNPLIYAFFYPWFRKAIKLIVTGKILRQNSSVTNLFPE.

Residues 1–47 (MDKLVDNFLSGQSRTMSEDLLSASSPQLCYENLNGSCIRSPYSPGPR) are Extracellular-facing. N-linked (GlcNAc...) asparagine glycosylation occurs at asparagine 34. Cystine bridges form between cysteine 37/cysteine 201 and cysteine 120/cysteine 205. The chain crosses the membrane as a helical span at residues 48 to 68 (LILYAVFGFGAVLAVCGNLLV). The Cytoplasmic segment spans residues 69–83 (MTSILHFRQLHSPAN). A helical transmembrane segment spans residues 84 to 104 (FLVASLACADFLVGLTVMPFS). The Extracellular portion of the chain corresponds to 105 to 121 (TVRSVEGCWYFGDTYCK). The helical transmembrane segment at 122-143 (FHSCFEGSFCYSSIFHLCFISV) threads the bilayer. The Cytoplasmic segment spans residues 144 to 166 (DRYIAVSDPLIYPTRFTASVSGK). Residues 167–187 (CITFSWLLSIIYSFSLLYTGA) form a helical membrane-spanning segment. Topologically, residues 188–212 (NEAGLEDLVSALTCVGGCQIAVNQS) are extracellular. An N-linked (GlcNAc...) asparagine glycan is attached at asparagine 210. The helical transmembrane segment at 213–233 (WVFINFLLFLVPTLVMMTVYS) threads the bilayer. Residues 234-274 (KIFLIAKQQAQNIEKMSKQTTRASESYKDRVAKRERKAAKT) lie on the Cytoplasmic side of the membrane. Residues 275-295 (LGIAVAAFLLSWLPYFIDSII) traverse the membrane as a helical segment. At 296 to 309 (DAFLGFITPTYVYE) the chain is on the extracellular side. Residues 310–333 (ILVWIAYYNSAMNPLIYAFFYPWF) traverse the membrane as a helical segment. Topologically, residues 334–358 (RKAIKLIVTGKILRQNSSVTNLFPE) are cytoplasmic.

It belongs to the G-protein coupled receptor 1 family.

It localises to the cell membrane. Olfactory receptor specific for N,N-dimethylalkylamines trace amines. Trace amine compounds are enriched in animal body fluids and act on trace amine-associated receptors (TAARs) to elicit both intraspecific and interspecific innate behaviors. Ligand-binding causes a conformation change that triggers signaling via G(s)-class of G alpha proteins (GNAL or GNAS). The chain is Trace amine-associated receptor 7a from Rattus norvegicus (Rat).